A 205-amino-acid polypeptide reads, in one-letter code: Putative 3-methyladenine DNA glycosylase (205 aa).

Belongs to the DNA glycosylase MPG family.

The chain is Putative 3-methyladenine DNA glycosylase from Clostridium acetobutylicum (strain ATCC 824 / DSM 792 / JCM 1419 / IAM 19013 / LMG 5710 / NBRC 13948 / NRRL B-527 / VKM B-1787 / 2291 / W).